A 389-amino-acid polypeptide reads, in one-letter code: Chalcone synthase (389 aa).

C164 is an active-site residue.

The protein belongs to the thiolase-like superfamily. Chalcone/stilbene synthases family.

The catalysed reaction is (E)-4-coumaroyl-CoA + 3 malonyl-CoA + 3 H(+) = 2',4,4',6'-tetrahydroxychalcone + 3 CO2 + 4 CoA. It functions in the pathway secondary metabolite biosynthesis; flavonoid biosynthesis. Its function is as follows. The primary product of this enzyme is 4,2',4',6'-tetrahydroxychalcone (also termed naringenin-chalcone or chalcone) which can under specific conditions spontaneously isomerize into naringenin. This Hydrangea macrophylla (Bigleaf hydrangea) protein is Chalcone synthase (CHS).